Reading from the N-terminus, the 206-residue chain is Probable N-acetyltransferase 14 (206 aa).

The N-acetyltransferase domain occupies 55–206 (LRFVLASFAL…TLVREFSKEL (152 aa)). A helical membrane pass occupies residues 57–77 (FVLASFALALLLPVFLAVAAM).

It belongs to the camello family.

It is found in the membrane. Its function is as follows. Probable acetyltransferase. May act as a transcription factor regulating the expression of coproporphyrinogen oxidase by binding to a promoter regulatory element. This chain is Probable N-acetyltransferase 14, found in Bos taurus (Bovine).